A 331-amino-acid chain; its full sequence is Ketol-acid reductoisomerase (NADP(+)) (331 aa).

One can recognise a KARI N-terminal Rossmann domain in the interval 2-182; the sequence is AQLFYDSDAD…GGTRAGILET (181 aa). Residues 25–28, Ser51, Ser53, and 83–86 each bind NADP(+); these read YGSQ and DEFQ. His108 is an active-site residue. Residue Gly134 coordinates NADP(+). In terms of domain architecture, KARI C-terminal knotted spans 183–328; sequence NFKEETETDL…KGLRSMFSWL (146 aa). 4 residues coordinate Mg(2+): Asp191, Glu195, Glu227, and Glu231. Ser252 contributes to the substrate binding site.

It belongs to the ketol-acid reductoisomerase family. It depends on Mg(2+) as a cofactor.

The catalysed reaction is (2R)-2,3-dihydroxy-3-methylbutanoate + NADP(+) = (2S)-2-acetolactate + NADPH + H(+). It catalyses the reaction (2R,3R)-2,3-dihydroxy-3-methylpentanoate + NADP(+) = (S)-2-ethyl-2-hydroxy-3-oxobutanoate + NADPH + H(+). The protein operates within amino-acid biosynthesis; L-isoleucine biosynthesis; L-isoleucine from 2-oxobutanoate: step 2/4. It participates in amino-acid biosynthesis; L-valine biosynthesis; L-valine from pyruvate: step 2/4. In terms of biological role, involved in the biosynthesis of branched-chain amino acids (BCAA). Catalyzes an alkyl-migration followed by a ketol-acid reduction of (S)-2-acetolactate (S2AL) to yield (R)-2,3-dihydroxy-isovalerate. In the isomerase reaction, S2AL is rearranged via a Mg-dependent methyl migration to produce 3-hydroxy-3-methyl-2-ketobutyrate (HMKB). In the reductase reaction, this 2-ketoacid undergoes a metal-dependent reduction by NADPH to yield (R)-2,3-dihydroxy-isovalerate. The polypeptide is Ketol-acid reductoisomerase (NADP(+)) (Synechococcus sp. (strain CC9902)).